The primary structure comprises 139 residues: Plastocyanin (139 aa).

A signal peptide spans M1–A34. The Plastocyanin-like domain maps to E35–G139. Cu cation-binding residues include H73, C123, H126, and M131.

It belongs to the plastocyanin family. The cofactor is Cu(2+).

It localises to the cellular thylakoid membrane. Functionally, participates in electron transfer between P700 and the cytochrome b6-f complex in photosystem I. This is Plastocyanin (petE) from Leptolyngbya laminosa (Phormidium laminosum).